The sequence spans 249 residues: Protein ZPS1 (249 aa).

An N-terminal signal peptide occupies residues 1-20; that stretch reads MKFSSGKSIIFATIASLALS. Asn-28, Asn-57, Asn-98, and Asn-217 each carry an N-linked (GlcNAc...) asparagine glycan.

The protein belongs to the ZPS1 family.

The protein is Protein ZPS1 (ZPS1) of Saccharomyces cerevisiae (strain ATCC 204508 / S288c) (Baker's yeast).